A 233-amino-acid chain; its full sequence is Lipid A 4'-phosphatase (233 aa).

A topological domain (cytoplasmic) is located at residue M1. Residues 2–22 (LLFWMWWALLAVFRAFPGIDI) form a helical membrane-spanning segment. Residues 23–60 (YFSQLFFVGADCDATAAAGNICGGFPYRDVAAFDLLRT) lie on the Extracellular side of the membrane. The helical transmembrane segment at 61-81 (VFFRLPYVVAIVMVWKLVECY) threads the bilayer. Over 82–94 (QQHGATFNAERAQ) the chain is Cytoplasmic. A helical transmembrane segment spans residues 95–115 (KLKVALGTLLIGPVLLVNVVL). At 116–149 (KEHWGRPRPIQTDIFGGALHFAEAGSLAGKCVSN) the chain is on the extracellular side. Residues 150–170 (CSFVSGEAASAGWLFCLLLFV) traverse the membrane as a helical segment. Residues 171–176 (PKSLRY) are Cytoplasmic-facing. A helical membrane pass occupies residues 177–197 (AVAAPLAAISILTPAMRLSFG). The Extracellular portion of the chain corresponds to 198-200 (AHY). A helical membrane pass occupies residues 201–221 (LSDVVLGWLSSLVVFAALLAL). Over 222 to 233 (TESQQHQKNSEI) the chain is Cytoplasmic.

This sequence belongs to the lipid A LpxF 4'-phosphatase family.

It is found in the cell inner membrane. The protein operates within bacterial outer membrane biogenesis; LPS lipid A biosynthesis. Removes the 4'-phosphate moiety from lipid IV(A) (a tetraacylated precursor of lipid A). The chain is Lipid A 4'-phosphatase from Rhizobium leguminosarum.